The primary structure comprises 274 residues: 2,3,4,5-tetrahydropyridine-2,6-dicarboxylate N-succinyltransferase (274 aa).

2 residues coordinate substrate: Arg104 and Asp141.

This sequence belongs to the transferase hexapeptide repeat family. In terms of assembly, homotrimer.

Its subcellular location is the cytoplasm. The enzyme catalyses (S)-2,3,4,5-tetrahydrodipicolinate + succinyl-CoA + H2O = (S)-2-succinylamino-6-oxoheptanedioate + CoA. It participates in amino-acid biosynthesis; L-lysine biosynthesis via DAP pathway; LL-2,6-diaminopimelate from (S)-tetrahydrodipicolinate (succinylase route): step 1/3. The polypeptide is 2,3,4,5-tetrahydropyridine-2,6-dicarboxylate N-succinyltransferase (Wigglesworthia glossinidia brevipalpis).